A 355-amino-acid polypeptide reads, in one-letter code: Alkanal monooxygenase alpha chain (355 aa).

It belongs to the bacterial luciferase oxidoreductase family. In terms of assembly, heterodimer of an alpha and a beta chain.

It carries out the reaction a long-chain fatty aldehyde + FMNH2 + O2 = a long-chain fatty acid + hnu + FMN + H2O + 2 H(+). Functionally, light-emitting reaction in luminous bacteria. This Vibrio harveyi (Beneckea harveyi) protein is Alkanal monooxygenase alpha chain (luxA).